We begin with the raw amino-acid sequence, 501 residues long: 2,3-bisphosphoglycerate-independent phosphoglycerate mutase (501 aa).

Residues Asp12 and Ser62 each coordinate Mn(2+). Ser62 serves as the catalytic Phosphoserine intermediate. Residues His121, 150–151 (RD), Arg182, Arg188, 253–256 (RSDR), and Lys322 each bind substrate. Residues Asp389, His393, Asp430, His431, and His449 each contribute to the Mn(2+) site.

This sequence belongs to the BPG-independent phosphoglycerate mutase family. Monomer. The cofactor is Mn(2+).

The catalysed reaction is (2R)-2-phosphoglycerate = (2R)-3-phosphoglycerate. It participates in carbohydrate degradation; glycolysis; pyruvate from D-glyceraldehyde 3-phosphate: step 3/5. Its function is as follows. Catalyzes the interconversion of 2-phosphoglycerate and 3-phosphoglycerate. In Ehrlichia ruminantium (strain Welgevonden), this protein is 2,3-bisphosphoglycerate-independent phosphoglycerate mutase.